We begin with the raw amino-acid sequence, 57 residues long: Large ribosomal subunit protein bL32 (57 aa).

The segment covering 1–19 has biased composition (basic residues); the sequence is MATPKRRMSRANTRSRRAQ. Residues 1 to 20 form a disordered region; the sequence is MATPKRRMSRANTRSRRAQW.

The protein belongs to the bacterial ribosomal protein bL32 family.

The protein is Large ribosomal subunit protein bL32 of Mycobacterium leprae (strain Br4923).